The sequence spans 335 residues: Tetraacyldisaccharide 4'-kinase (335 aa).

51 to 58 serves as a coordination point for ATP; that stretch reads HVGGAGKT.

This sequence belongs to the LpxK family.

The catalysed reaction is a lipid A disaccharide + ATP = a lipid IVA + ADP + H(+). Its pathway is glycolipid biosynthesis; lipid IV(A) biosynthesis; lipid IV(A) from (3R)-3-hydroxytetradecanoyl-[acyl-carrier-protein] and UDP-N-acetyl-alpha-D-glucosamine: step 6/6. In terms of biological role, transfers the gamma-phosphate of ATP to the 4'-position of a tetraacyldisaccharide 1-phosphate intermediate (termed DS-1-P) to form tetraacyldisaccharide 1,4'-bis-phosphate (lipid IVA). The protein is Tetraacyldisaccharide 4'-kinase of Nitrobacter hamburgensis (strain DSM 10229 / NCIMB 13809 / X14).